A 520-amino-acid chain; its full sequence is ATP synthase subunit alpha (520 aa).

Residue 169–176 (GDRKTGKT) coordinates ATP.

It belongs to the ATPase alpha/beta chains family. In terms of assembly, F-type ATPases have 2 components, CF(1) - the catalytic core - and CF(0) - the membrane proton channel. CF(1) has five subunits: alpha(3), beta(3), gamma(1), delta(1), epsilon(1). CF(0) has three main subunits: a(1), b(2) and c(9-12). The alpha and beta chains form an alternating ring which encloses part of the gamma chain. CF(1) is attached to CF(0) by a central stalk formed by the gamma and epsilon chains, while a peripheral stalk is formed by the delta and b chains.

It localises to the cell membrane. It carries out the reaction ATP + H2O + 4 H(+)(in) = ADP + phosphate + 5 H(+)(out). In terms of biological role, produces ATP from ADP in the presence of a proton gradient across the membrane. The alpha chain is a regulatory subunit. The sequence is that of ATP synthase subunit alpha from Oenococcus oeni (strain ATCC BAA-331 / PSU-1).